Reading from the N-terminus, the 233-residue chain is Uridylate kinase (233 aa).

Residue 9–10 (GS) participates in ATP binding. Glycine 43 provides a ligand contact to UMP. The ATP site is built by glycine 44 and arginine 48. UMP-binding positions include aspartate 65 and 113–119 (VTPGQTT). Residues threonine 139, tyrosine 145, and aspartate 148 each contribute to the ATP site.

This sequence belongs to the UMP kinase family. Homohexamer.

Its subcellular location is the cytoplasm. It carries out the reaction UMP + ATP = UDP + ADP. It participates in pyrimidine metabolism; CTP biosynthesis via de novo pathway; UDP from UMP (UMPK route): step 1/1. Inhibited by UTP. Catalyzes the reversible phosphorylation of UMP to UDP. The sequence is that of Uridylate kinase from Methanosarcina mazei (strain ATCC BAA-159 / DSM 3647 / Goe1 / Go1 / JCM 11833 / OCM 88) (Methanosarcina frisia).